The following is a 362-amino-acid chain: Molybdenum import ATP-binding protein ModC (362 aa).

Residues 2-236 (VSPIEVRLQM…LDLPLAMGDD (235 aa)) enclose the ABC transporter domain. 34–41 (GPSGSGKT) serves as a coordination point for ATP. The 66-residue stretch at 297–362 (HSSILNRLPV…AQIKAVAVLA (66 aa)) folds into the Mop domain.

The protein belongs to the ABC transporter superfamily. Molybdate importer (TC 3.A.1.8) family. In terms of assembly, the complex is composed of two ATP-binding proteins (ModC), two transmembrane proteins (ModB) and a solute-binding protein (ModA).

It localises to the cell inner membrane. The catalysed reaction is molybdate(out) + ATP + H2O = molybdate(in) + ADP + phosphate + H(+). Part of the ABC transporter complex ModABC involved in molybdenum import. Responsible for energy coupling to the transport system. The chain is Molybdenum import ATP-binding protein ModC from Pseudomonas syringae pv. tomato (strain ATCC BAA-871 / DC3000).